Here is a 62-residue protein sequence, read N- to C-terminus: MKTLVLFIIFGLAALFLLSSATELEETERGCQKFFWTCHPGQPPCCSGLACTWPTEICILGR.

Residues 1-21 (MKTLVLFIIFGLAALFLLSSA) form the signal peptide. Residues 22 to 29 (TELEETER) constitute a propeptide that is removed on maturation. Disulfide bonds link Cys-31/Cys-46, Cys-38/Cys-51, and Cys-45/Cys-58.

It belongs to the neurotoxin 10 (Hwtx-1) family. 30 (Jztx-14) subfamily. As to expression, expressed by the venom gland.

The protein resides in the secreted. Functionally, probable ion channel inhibitor. The sequence is that of U8-theraphotoxin-Cg1a 2 from Chilobrachys guangxiensis (Chinese earth tiger tarantula).